The chain runs to 131 residues: Profilin-8 (131 aa).

Cys-13 and Cys-115 are oxidised to a cystine. Positions Ala-81–Thr-97 match the Involved in PIP2 interaction motif. A Phosphothreonine modification is found at Thr-111.

The protein belongs to the profilin family. As to quaternary structure, occurs in many kinds of cells as a complex with monomeric actin in a 1:1 ratio. In terms of processing, phosphorylated by MAP kinases.

It localises to the cytoplasm. The protein resides in the cytoskeleton. Its function is as follows. Binds to actin and affects the structure of the cytoskeleton. At high concentrations, profilin prevents the polymerization of actin, whereas it enhances it at low concentrations. In Phleum pratense (Common timothy), this protein is Profilin-8.